The primary structure comprises 394 residues: Acetate kinase (394 aa).

N10 lines the Mg(2+) pocket. An ATP-binding site is contributed by K17. R87 lines the substrate pocket. D144 (proton donor/acceptor) is an active-site residue. ATP contacts are provided by residues H204 to G208, D279 to R281, and G327 to N331. E381 is a binding site for Mg(2+).

It belongs to the acetokinase family. As to quaternary structure, homodimer. Mg(2+) serves as cofactor. The cofactor is Mn(2+).

Its subcellular location is the cytoplasm. The catalysed reaction is acetate + ATP = acetyl phosphate + ADP. Its pathway is metabolic intermediate biosynthesis; acetyl-CoA biosynthesis; acetyl-CoA from acetate: step 1/2. In terms of biological role, catalyzes the formation of acetyl phosphate from acetate and ATP. Can also catalyze the reverse reaction. The polypeptide is Acetate kinase (Pseudomonas aeruginosa (strain LESB58)).